We begin with the raw amino-acid sequence, 103 residues long: Pyrimidine/purine nucleoside phosphorylase (103 aa).

It belongs to the nucleoside phosphorylase PpnP family.

It catalyses the reaction a purine D-ribonucleoside + phosphate = a purine nucleobase + alpha-D-ribose 1-phosphate. The catalysed reaction is adenosine + phosphate = alpha-D-ribose 1-phosphate + adenine. The enzyme catalyses cytidine + phosphate = cytosine + alpha-D-ribose 1-phosphate. It carries out the reaction guanosine + phosphate = alpha-D-ribose 1-phosphate + guanine. It catalyses the reaction inosine + phosphate = alpha-D-ribose 1-phosphate + hypoxanthine. The catalysed reaction is thymidine + phosphate = 2-deoxy-alpha-D-ribose 1-phosphate + thymine. The enzyme catalyses uridine + phosphate = alpha-D-ribose 1-phosphate + uracil. It carries out the reaction xanthosine + phosphate = alpha-D-ribose 1-phosphate + xanthine. Functionally, catalyzes the phosphorolysis of diverse nucleosides, yielding D-ribose 1-phosphate and the respective free bases. Can use uridine, adenosine, guanosine, cytidine, thymidine, inosine and xanthosine as substrates. Also catalyzes the reverse reactions. The sequence is that of Pyrimidine/purine nucleoside phosphorylase from Dechloromonas aromatica (strain RCB).